The primary structure comprises 174 residues: Myosin regulatory light chain sqh (174 aa).

T21 bears the Phosphothreonine mark. The residue at position 22 (S22) is a Phosphoserine. EF-hand domains lie at 31–66 (AQIA…LGKN) and 100–135 (DPED…MGDR). Ca(2+) contacts are provided by D44, N46, D48, and D55.

Myosin is a hexamer of 2 heavy chains and 4 light chains. In terms of processing, phosphorylation plays a central role in myosin regulation.

Its function is as follows. Required for cytokinesis, could regulate contractile ring function. The chain is Myosin regulatory light chain sqh (sqh) from Drosophila melanogaster (Fruit fly).